Reading from the N-terminus, the 330-residue chain is Type II restriction enzyme Cfr9I (330 aa).

It belongs to the XcyI type II restriction endonuclease family. The cofactor is Mg(2+).

It catalyses the reaction Endonucleolytic cleavage of DNA to give specific double-stranded fragments with terminal 5'-phosphates.. An E and P subtype restriction enzyme that recognizes the double-stranded sequence 5'-CCCGGG-3' and cleaves after C-1. This is Type II restriction enzyme Cfr9I (cfr9IR) from Citrobacter freundii.